A 278-amino-acid polypeptide reads, in one-letter code: Envelope glycoprotein L (278 aa).

A signal peptide spans 1–30; sequence MCRRPDCGFSFSPGPVILLWCCLLLPIVSS. Residues 43-256 form the gL betaherpesvirus-type domain; the sequence is VPAECPELTR…DKYYAGLPPE (214 aa). A disulfide bond links C154 and C159.

It belongs to the herpesviridae glycoprotein L (gL) family. Betaherpesvirinae gL subfamily. Interacts with glycoprotein H (gH); this interaction is necessary for the correct processing and cell surface expression of gH. Forms the envelope pentamer complex (PC) composed of gH, gL, UL128, UL130, and UL131A. The pentamer interacts with host NRP2. Forms the envelope trimer complex composed of gH, gL, and gO. The trimer interacts with host PDGFRA. The trimer also interacts with host EPHA2.

It is found in the virion membrane. The protein resides in the host cell membrane. It localises to the host Golgi apparatus. The protein localises to the host trans-Golgi network. Its function is as follows. The heterodimer glycoprotein H-glycoprotein L is required for the fusion of viral and plasma membranes leading to virus entry into the host cell. Acts as a functional inhibitor of gH and maintains gH in an inhibited form. Upon binding to host integrins, gL dissociates from gH leading to activation of the viral fusion glycoproteins gB and gH. In human cytomegalovirus, forms two distincts complexes to mediate viral entry, a trimer and a pentamer at the surface of the virion envelope. The gH-gL-gO trimer is required for infection in fibroblasts by interacting with host PDGFRA, and in glioblastoma cells by interacting with host EPHA2. The gH-gL-UL128-UL130-UL131A pentamer is essential for viral entry in epithelial, endothelial and myeloid cells via interaction with host NRP2. In Human cytomegalovirus (strain 5160) (HHV-5), this protein is Envelope glycoprotein L.